Consider the following 867-residue polypeptide: Inactive tyrosine-protein kinase kin-32 (867 aa).

Positions 3 to 327 constitute an FERM domain; sequence GLARVFLIGG…GYQMLYNQRD (325 aa). The Protein kinase domain maps to 367 to 631; sequence ITLKELIGGG…IIEDVRQQII (265 aa). ATP-binding positions include 373–381 and lysine 400; that span reads IGGGQFGNV. A coiled-coil region spans residues 662–691; that stretch reads TLYRTMEDQKRQAEEDAKWLEQEDDEDEDD. The tract at residues 674 to 729 is disordered; it reads AEEDAKWLEQEDDEDEDDQDIDQIPSTSHSSVENIRTSNGYLHHTPTSTRSLRFED. A compositionally biased stretch (acidic residues) spans 683-694; it reads QEDDEDEDDQDI. The segment covering 698–724 has biased composition (polar residues); that stretch reads PSTSHSSVENIRTSNGYLHHTPTSTRS.

Belongs to the protein kinase superfamily. Tyr protein kinase family. FAK subfamily. In terms of tissue distribution, expressed in body wall muscles and some neurons in the head.

In terms of biological role, has apparently no tyrosine kinase activity in vitro when expressed in mammalian cells. The chain is Inactive tyrosine-protein kinase kin-32 from Caenorhabditis elegans.